The following is a 246-amino-acid chain: Hydroxyacylglutathione hydrolase (246 aa).

Zn(2+)-binding residues include histidine 58, histidine 60, aspartate 62, histidine 63, histidine 117, aspartate 137, and histidine 175.

The protein belongs to the metallo-beta-lactamase superfamily. Glyoxalase II family. Monomer. Zn(2+) serves as cofactor.

The enzyme catalyses an S-(2-hydroxyacyl)glutathione + H2O = a 2-hydroxy carboxylate + glutathione + H(+). It functions in the pathway secondary metabolite metabolism; methylglyoxal degradation; (R)-lactate from methylglyoxal: step 2/2. Its function is as follows. Thiolesterase that catalyzes the hydrolysis of S-D-lactoyl-glutathione to form glutathione and D-lactic acid. This chain is Hydroxyacylglutathione hydrolase, found in Prochlorococcus marinus (strain MIT 9312).